Here is an 87-residue protein sequence, read N- to C-terminus: Phosphoribosyl-ATP pyrophosphatase (87 aa).

The protein belongs to the PRA-PH family.

The protein resides in the cytoplasm. It carries out the reaction 1-(5-phospho-beta-D-ribosyl)-ATP + H2O = 1-(5-phospho-beta-D-ribosyl)-5'-AMP + diphosphate + H(+). It functions in the pathway amino-acid biosynthesis; L-histidine biosynthesis; L-histidine from 5-phospho-alpha-D-ribose 1-diphosphate: step 2/9. The sequence is that of Phosphoribosyl-ATP pyrophosphatase from Paenarthrobacter aurescens (strain TC1).